A 295-amino-acid polypeptide reads, in one-letter code: Urease accessory protein UreD (295 aa).

It belongs to the UreD family. As to quaternary structure, ureD, UreF and UreG form a complex that acts as a GTP-hydrolysis-dependent molecular chaperone, activating the urease apoprotein by helping to assemble the nickel containing metallocenter of UreC. The UreE protein probably delivers the nickel.

It localises to the cytoplasm. In terms of biological role, required for maturation of urease via the functional incorporation of the urease nickel metallocenter. This is Urease accessory protein UreD from Ralstonia nicotianae (strain ATCC BAA-1114 / GMI1000) (Ralstonia solanacearum).